A 543-amino-acid polypeptide reads, in one-letter code: Bifunctional purine biosynthesis protein PurH (543 aa).

One can recognise an MGS-like domain in the interval 5-151 (NHARPIRRAL…KNHKDVTIVV (147 aa)).

It belongs to the PurH family.

It carries out the reaction (6R)-10-formyltetrahydrofolate + 5-amino-1-(5-phospho-beta-D-ribosyl)imidazole-4-carboxamide = 5-formamido-1-(5-phospho-D-ribosyl)imidazole-4-carboxamide + (6S)-5,6,7,8-tetrahydrofolate. It catalyses the reaction IMP + H2O = 5-formamido-1-(5-phospho-D-ribosyl)imidazole-4-carboxamide. It participates in purine metabolism; IMP biosynthesis via de novo pathway; 5-formamido-1-(5-phospho-D-ribosyl)imidazole-4-carboxamide from 5-amino-1-(5-phospho-D-ribosyl)imidazole-4-carboxamide (10-formyl THF route): step 1/1. The protein operates within purine metabolism; IMP biosynthesis via de novo pathway; IMP from 5-formamido-1-(5-phospho-D-ribosyl)imidazole-4-carboxamide: step 1/1. The polypeptide is Bifunctional purine biosynthesis protein PurH (Shewanella oneidensis (strain ATCC 700550 / JCM 31522 / CIP 106686 / LMG 19005 / NCIMB 14063 / MR-1)).